Reading from the N-terminus, the 563-residue chain is Solute carrier family 22 member 6 (563 aa).

Residues 1-9 are Cytoplasmic-facing; sequence MAFNDLLQQ. A helical membrane pass occupies residues 10–30; sequence VGGVGRFQQIQVTLVVLPLLL. Residues 31 to 135 are Extracellular-facing; sequence MASHNTLQNF…LVCSHRALRQ (105 aa). N-linked (GlcNAc...) asparagine glycosylation is found at N39, N56, N92, N97, and N113. The chain crosses the membrane as a helical span at residues 136–156; that stretch reads LAQSLYMVGVLLGAMVFGYLA. The Cytoplasmic segment spans residues 157 to 164; the sequence is DRLGRRKV. The helical transmembrane segment at 165–187 threads the bilayer; that stretch reads LILNYLQTAVSGTCAAFAPNFPI. The Extracellular segment spans residues 188–190; it reads YCA. Residues 191–213 form a helical membrane-spanning segment; the sequence is FRLLSGMALAGISLNCMTLNVEW. Residues 214 to 224 lie on the Cytoplasmic side of the membrane; it reads MPIHTRACVGT. The chain crosses the membrane as a helical span at residues 225–245; it reads LIGYVYSLGQFLLAGVAYAVP. The Extracellular segment spans residues 246 to 248; the sequence is HWR. The helical transmembrane segment at 249-269 threads the bilayer; sequence HLQLLVSAPFFAFFIYSWFFI. The Cytoplasmic segment spans residues 270–337; the sequence is ESARWHSSSG…ELLRCPTLRH (68 aa). Residues 338–358 traverse the membrane as a helical segment; that stretch reads LFLCLSMLWFATSFAYYGLVM. Residues 359-368 are Extracellular-facing; that stretch reads DLQGFGVSIY. A helical transmembrane segment spans residues 369–389; sequence LIQVIFGAVDLPAKLVGFLVI. The Cytoplasmic segment spans residues 390–395; the sequence is NSLGRR. A helical transmembrane segment spans residues 396 to 416; sequence PAQMAALLLAGICILLNGVIP. Over 417-425 the chain is Extracellular; that stretch reads QDQSIVRTS. A helical membrane pass occupies residues 426–446; the sequence is LAVLGKGCLAASFNCIFLYTG. At 447-455 the chain is on the cytoplasmic side; that stretch reads ELYPTMIRQ. Residues 456–475 traverse the membrane as a helical segment; sequence TGMGMGSTMARVGSIVSPLV. Topologically, residues 476–484 are extracellular; it reads SMTAELYPS. A helical transmembrane segment spans residues 485-505; sequence MPLFIYGAVPVAASAVTVLLP. Over 506–563 the chain is Cytoplasmic; the sequence is ETLGQPLPDTVQDLESRWAPTQKEAGIYPRKGKQTRQQQEHQKYMVPLQASAQEKNGL. The disordered stretch occupies residues 525-563; the sequence is PTQKEAGIYPRKGKQTRQQQEHQKYMVPLQASAQEKNGL.

This sequence belongs to the major facilitator (TC 2.A.1) superfamily. Organic cation transporter (TC 2.A.1.19) family. Glycosylated. Glycosylation at Asn-113 may occur at a secondary level. Glycosylation is necessary for proper targeting of the transporter to the plasma membrane. In terms of tissue distribution, strongly expressed in kidney. Expressed at lower level in liver, skeletal muscle, brain and placenta. In kidney, found at the basolateral membrane of the proximal tubule. In testis, primarily localized to the basal membrane of Sertoli cells and weakly expressed in Leydig cells and vascular endothelial cells.

Its subcellular location is the basolateral cell membrane. It is found in the basal cell membrane. The catalysed reaction is (6R)-L-erythro-5,6,7,8-tetrahydrobiopterin(out) + a dicarboxylate(in) = (6R)-L-erythro-5,6,7,8-tetrahydrobiopterin(in) + a dicarboxylate(out). It carries out the reaction L-erythro-7,8-dihydrobiopterin(out) + a dicarboxylate(in) = L-erythro-7,8-dihydrobiopterin(in) + a dicarboxylate(out). It catalyses the reaction L-sepiapterin(out) + a dicarboxylate(in) = L-sepiapterin(in) + a dicarboxylate(out). The enzyme catalyses prostaglandin F2alpha(out) + a dicarboxylate(in) = prostaglandin F2alpha(in) + a dicarboxylate(out). The catalysed reaction is prostaglandin E2(out) + a dicarboxylate(in) = prostaglandin E2(in) + a dicarboxylate(out). It carries out the reaction 3',5'-cyclic AMP(out) + a dicarboxylate(in) = 3',5'-cyclic AMP(in) + a dicarboxylate(out). It catalyses the reaction 3',5'-cyclic GMP(out) + a dicarboxylate(in) = 3',5'-cyclic GMP(in) + a dicarboxylate(out). The enzyme catalyses urate(out) + a dicarboxylate(in) = urate(in) + a dicarboxylate(out). The catalysed reaction is kynurenate(out) + glutarate(in) = kynurenate(in) + glutarate(out). It carries out the reaction (indol-3-yl)acetate(out) + a dicarboxylate(in) = (indol-3-yl)acetate(in) + a dicarboxylate(out). It catalyses the reaction indoxyl sulfate(out) + a dicarboxylate(in) = indoxyl sulfate(in) + a dicarboxylate(out). The enzyme catalyses N-benzoylglycine(out) + a dicarboxylate(in) = N-benzoylglycine(in) + a dicarboxylate(out). The catalysed reaction is 3-carboxy-4-methyl-5-propyl-2-furanpropanoate(out) + a dicarboxylate(in) = 3-carboxy-4-methyl-5-propyl-2-furanpropanoate(in) + a dicarboxylate(out). Its function is as follows. Secondary active transporter that functions as a Na(+)-independent organic anion (OA)/dicarboxylate antiporter where the uptake of one molecule of OA into the cell is coupled with an efflux of one molecule of intracellular dicarboxylate such as 2-oxoglutarate or glutarate. Mediates the uptake of OA across the basolateral side of proximal tubule epithelial cells, thereby contributing to the renal elimination of endogenous OA from the systemic circulation into the urine. Functions as a biopterin transporters involved in the uptake and the secretion of coenzymes tetrahydrobiopterin (BH4), dihydrobiopterin (BH2) and sepiapterin to urine, thereby determining baseline levels of blood biopterins. Transports prostaglandin E2 (PGE2) and prostaglandin F2-alpha (PGF2-alpha) and may contribute to their renal excretion. Also mediates the uptake of cyclic nucleotides such as cAMP and cGMP. Involved in the transport of neuroactive tryptophan metabolites kynurenate (KYNA) and xanthurenate (XA) and may contribute to their secretion from the brain. May transport glutamate. Also involved in the disposition of uremic toxins and potentially toxic xenobiotics by the renal organic anion secretory pathway, helping reduce their undesired toxicological effects on the body. Uremic toxins include the indoxyl sulfate (IS), hippurate/N-benzoylglycine (HA), indole acetate (IA), 3-carboxy-4- methyl-5-propyl-2-furanpropionate (CMPF) and urate. Xenobiotics include the mycotoxin ochratoxin (OTA). May also contribute to the transport of organic compounds in testes across the blood-testis-barrier. This is Solute carrier family 22 member 6 from Homo sapiens (Human).